The primary structure comprises 346 residues: ATP-dependent (S)-NAD(P)H-hydrate dehydratase 2 (346 aa).

Residues 1–20 are disordered; that stretch reads MMVHSPLATGPHPTTHLEPT. The YjeF C-terminal domain occupies 28-339; that stretch reads LLRKAFQMIP…GYIGEAFEQV (312 aa). (6S)-NADPHX contacts are provided by residues Gly-135 and 188–194; that span reads NHVEFQR. Residues 228–232 and 248–257 each bind ATP; these read KGSID and GSPKRCGGQG. A (6S)-NADPHX-binding site is contributed by Asp-258.

Belongs to the NnrD/CARKD family. Mg(2+) serves as cofactor.

The protein localises to the cytoplasm. It catalyses the reaction (6S)-NADHX + ATP = ADP + phosphate + NADH + H(+). It carries out the reaction (6S)-NADPHX + ATP = ADP + phosphate + NADPH + H(+). Catalyzes the dehydration of the S-form of NAD(P)HX at the expense of ATP, which is converted to ADP. Together with NAD(P)HX epimerase, which catalyzes the epimerization of the S- and R-forms, the enzyme allows the repair of both epimers of NAD(P)HX, a damaged form of NAD(P)H that is a result of enzymatic or heat-dependent hydration. This Puccinia graminis f. sp. tritici (strain CRL 75-36-700-3 / race SCCL) (Black stem rust fungus) protein is ATP-dependent (S)-NAD(P)H-hydrate dehydratase 2.